Consider the following 405-residue polypeptide: Lariat debranching enzyme (405 aa).

4 residues coordinate a divalent metal cation: Cys11, His13, Asp40, and Asn85. The lariat recognition loop stretch occupies residues 125 to 159; sequence SGIWKEWDFNKQRPDWNDLENNNWKANIRNLYHVR. Residues His179, His231, and His233 each coordinate a divalent metal cation. A disordered region spans residues 242 to 277; that stretch reads HNKRSHEPPNKSTSKTKKNNNEIDLDLSSDEDERSG. Residues 264–274 are compositionally biased toward acidic residues; it reads IDLDLSSDEDE. A Phosphoserine modification is found at Ser269.

It belongs to the lariat debranching enzyme family. Fe(2+) serves as cofactor. Requires Zn(2+) as cofactor. It depends on Mn(2+) as a cofactor.

Its subcellular location is the nucleus. It is found in the cytoplasm. With respect to regulation, active in presence of diverse metals including Fe(2+), Zn(2+) and Mn(2+). Binds two metal cations in two adjacent alpha and beta metal-binding pockets. The activity is the highest with Fe(2+) bound to the 2 metal-binding sites. Activity is low with Zn(2+) and Mn(2+). Cleaves the 2'-5' phosphodiester linkage at the branch point of lariat intron pre-mRNAs after splicing and converts them into linear molecules that are subsequently degraded, thereby facilitating ribonucleotide turnover. It also participates in Ty1 retrovirus-like transposition via an RNA lariat intermediate in cDNA synthesis. This is Lariat debranching enzyme (DBR1) from Saccharomyces cerevisiae (strain ATCC 204508 / S288c) (Baker's yeast).